Reading from the N-terminus, the 97-residue chain is MHGNYPTLKEIVLELDPPDPVGLHCNEQLDSSEDEVDELATQATQDVTQPYQIVTTCGTCNRNVRLVVQCTGTDICQLHTLLLGSLEILCPVCAPKN.

Residues 1-41 are E7 terminal domain; sequence MHGNYPTLKEIVLELDPPDPVGLHCNEQLDSSEDEVDELAT. An LXCXE motif; interaction with host RB1 and TMEM173/STING motif is present at residues 23 to 27; it reads LHCNE. A zinc finger lies at 57-93; that stretch reads CGTCNRNVRLVVQCTGTDICQLHTLLLGSLEILCPVC. The Nuclear export signal motif lies at 75-83; that stretch reads ICQLHTLLL.

The protein belongs to the papillomaviridae E7 protein family. As to quaternary structure, homodimer. Homooligomer. Interacts with host RB1; this interaction induces dissociation of RB1-E2F1 complex thereby disrupting RB1 activity. Interacts with host EP300; this interaction represses EP300 transcriptional activity. Interacts with protein E2; this interaction inhibits E7 oncogenic activity. Interacts with host TMEM173/STING; this interaction impairs the ability of TMEM173/STING to sense cytosolic DNA and promote the production of type I interferon (IFN-alpha and IFN-beta). Highly phosphorylated.

It localises to the host cytoplasm. It is found in the host nucleus. Functionally, plays a role in viral genome replication by driving entry of quiescent cells into the cell cycle. Stimulation of progression from G1 to S phase allows the virus to efficiently use the cellular DNA replicating machinery to achieve viral genome replication. E7 protein has both transforming and trans-activating activities. Induces the disassembly of the E2F1 transcription factor from RB1, with subsequent transcriptional activation of E2F1-regulated S-phase genes. Interferes with host histone deacetylation mediated by HDAC1 and HDAC2, leading to transcription activation. Also plays a role in the inhibition of both antiviral and antiproliferative functions of host interferon alpha. Interaction with host TMEM173/STING impairs the ability of TMEM173/STING to sense cytosolic DNA and promote the production of type I interferon (IFN-alpha and IFN-beta). This is Protein E7 from Homo sapiens (Human).